Consider the following 137-residue polypeptide: Fluoride-specific ion channel FluC 4 (137 aa).

4 helical membrane passes run 20 to 40, 43 to 63, 83 to 103, and 110 to 130; these read AAIGALLRFLSGWVIVAILGA, LWGTSFVNIVGSFIIMFFATL, GLCGGLTTFSSMSLDTFLLVL, and ALAYLCGLVFLSLSAAMLGLI. 2 residues coordinate Na(+): Gly-86 and Thr-89.

Belongs to the fluoride channel Fluc/FEX (TC 1.A.43) family.

It localises to the cell inner membrane. The catalysed reaction is fluoride(in) = fluoride(out). With respect to regulation, na(+) is not transported, but it plays an essential structural role and its presence is essential for fluoride channel function. Its function is as follows. Fluoride-specific ion channel. Important for reducing fluoride concentration in the cell, thus reducing its toxicity. This chain is Fluoride-specific ion channel FluC 4, found in Brucella suis biovar 1 (strain 1330).